Reading from the N-terminus, the 423-residue chain is Glutamyl-tRNA reductase (423 aa).

Residues threonine 49–arginine 52, serine 107, glutamate 112–glutamine 114, and glutamine 118 contribute to the substrate site. Cysteine 50 (nucleophile) is an active-site residue. Glycine 187–isoleucine 192 lines the NADP(+) pocket.

The protein belongs to the glutamyl-tRNA reductase family. As to quaternary structure, homodimer.

It carries out the reaction (S)-4-amino-5-oxopentanoate + tRNA(Glu) + NADP(+) = L-glutamyl-tRNA(Glu) + NADPH + H(+). It functions in the pathway porphyrin-containing compound metabolism; protoporphyrin-IX biosynthesis; 5-aminolevulinate from L-glutamyl-tRNA(Glu): step 1/2. Catalyzes the NADPH-dependent reduction of glutamyl-tRNA(Glu) to glutamate 1-semialdehyde (GSA). This Pseudoalteromonas atlantica (strain T6c / ATCC BAA-1087) protein is Glutamyl-tRNA reductase.